The sequence spans 473 residues: Glutamate--tRNA ligase 1 (473 aa).

Positions 11-21 (PSPTGFLHIGG) match the 'HIGH' region motif. Positions 111–132 (REQARKEGRPPRYDGRWRDRAE) are disordered. Residues 240–244 (KLSKR) carry the 'KMSKS' region motif. Lysine 243 provides a ligand contact to ATP.

This sequence belongs to the class-I aminoacyl-tRNA synthetase family. Glutamate--tRNA ligase type 1 subfamily. As to quaternary structure, monomer.

It localises to the cytoplasm. It carries out the reaction tRNA(Glu) + L-glutamate + ATP = L-glutamyl-tRNA(Glu) + AMP + diphosphate. Functionally, catalyzes the attachment of glutamate to tRNA(Glu) in a two-step reaction: glutamate is first activated by ATP to form Glu-AMP and then transferred to the acceptor end of tRNA(Glu). The polypeptide is Glutamate--tRNA ligase 1 (Beijerinckia indica subsp. indica (strain ATCC 9039 / DSM 1715 / NCIMB 8712)).